Here is a 25-residue protein sequence, read N- to C-terminus: Oxyopinin-3c (25 aa).

As to expression, expressed by the venom gland.

The protein resides in the secreted. Its function is as follows. May have cytolytic and antimicrobial activity. This Oxyopes takobius (Lynx spider) protein is Oxyopinin-3c.